The primary structure comprises 486 residues: 2-isopropylmalate synthase (486 aa).

The Pyruvate carboxyltransferase domain occupies 4 to 266 (VYIFDTTLRD…KTDVNLKEIA (263 aa)). Residues D13, H201, H203, and N237 each contribute to the Mn(2+) site. The segment at 390-486 (KVEIIHVTSG…LSTDIIEASA (97 aa)) is regulatory domain.

The protein belongs to the alpha-IPM synthase/homocitrate synthase family. LeuA type 1 subfamily. Mn(2+) is required as a cofactor.

It localises to the cytoplasm. It catalyses the reaction 3-methyl-2-oxobutanoate + acetyl-CoA + H2O = (2S)-2-isopropylmalate + CoA + H(+). The protein operates within amino-acid biosynthesis; L-leucine biosynthesis; L-leucine from 3-methyl-2-oxobutanoate: step 1/4. Functionally, catalyzes the condensation of the acetyl group of acetyl-CoA with 3-methyl-2-oxobutanoate (2-ketoisovalerate) to form 3-carboxy-3-hydroxy-4-methylpentanoate (2-isopropylmalate). The chain is 2-isopropylmalate synthase from Pyrococcus abyssi (strain GE5 / Orsay).